A 250-amino-acid chain; its full sequence is Ribosomal RNA small subunit methyltransferase J (250 aa).

Residues 96–97 (RD) and D168 each bind S-adenosyl-L-methionine.

It belongs to the methyltransferase superfamily. RsmJ family.

It is found in the cytoplasm. The enzyme catalyses guanosine(1516) in 16S rRNA + S-adenosyl-L-methionine = N(2)-methylguanosine(1516) in 16S rRNA + S-adenosyl-L-homocysteine + H(+). In terms of biological role, specifically methylates the guanosine in position 1516 of 16S rRNA. The sequence is that of Ribosomal RNA small subunit methyltransferase J from Neisseria meningitidis serogroup B (strain ATCC BAA-335 / MC58).